The primary structure comprises 56 residues: uncharacterized protein (56 aa).

Residues I30–I52 form a helical membrane-spanning segment.

The protein localises to the membrane. This is an uncharacterized protein from Dictyostelium discoideum (Social amoeba).